Reading from the N-terminus, the 432-residue chain is 3-phosphoshikimate 1-carboxyvinyltransferase (432 aa).

The 3-phosphoshikimate site is built by K22, S23, and R27. Phosphoenolpyruvate is bound at residue K22. 2 residues coordinate phosphoenolpyruvate: G96 and R127. 3-phosphoshikimate-binding residues include S173, S174, Q175, S201, D316, N339, and K343. Q175 serves as a coordination point for phosphoenolpyruvate. The Proton acceptor role is filled by D316. Residues R347, R391, and K416 each coordinate phosphoenolpyruvate.

Belongs to the EPSP synthase family. Monomer.

It is found in the cytoplasm. It catalyses the reaction 3-phosphoshikimate + phosphoenolpyruvate = 5-O-(1-carboxyvinyl)-3-phosphoshikimate + phosphate. Its pathway is metabolic intermediate biosynthesis; chorismate biosynthesis; chorismate from D-erythrose 4-phosphate and phosphoenolpyruvate: step 6/7. Catalyzes the transfer of the enolpyruvyl moiety of phosphoenolpyruvate (PEP) to the 5-hydroxyl of shikimate-3-phosphate (S3P) to produce enolpyruvyl shikimate-3-phosphate and inorganic phosphate. The protein is 3-phosphoshikimate 1-carboxyvinyltransferase of Haemophilus influenzae (strain PittGG).